Reading from the N-terminus, the 193-residue chain is Adenylate kinase (193 aa).

Position 10-15 (10-15 (GAGKGT)) interacts with ATP. The NMP stretch occupies residues 30–59 (STGDMLRAAVKAGTPIGLKAKAVMDAGGLV). AMP contacts are provided by residues threonine 31, arginine 36, 57 to 59 (GLV), 85 to 88 (GFPR), and glutamine 92. The LID stretch occupies residues 126–142 (KRAKETLAAGGTVRADD). Arginine 127 is a binding site for ATP. The AMP site is built by arginine 139 and arginine 150. Alanine 178 is an ATP binding site.

Belongs to the adenylate kinase family. As to quaternary structure, monomer.

It localises to the cytoplasm. The enzyme catalyses AMP + ATP = 2 ADP. The protein operates within purine metabolism; AMP biosynthesis via salvage pathway; AMP from ADP: step 1/1. Catalyzes the reversible transfer of the terminal phosphate group between ATP and AMP. Plays an important role in cellular energy homeostasis and in adenine nucleotide metabolism. The chain is Adenylate kinase from Beijerinckia indica subsp. indica (strain ATCC 9039 / DSM 1715 / NCIMB 8712).